We begin with the raw amino-acid sequence, 147 residues long: FAD synthase (147 aa).

ATP is bound by residues 13–14, 18–21, Asp100, and Phe127; these read TF and HEGH.

This sequence belongs to the archaeal FAD synthase family. In terms of assembly, homodimer. A divalent metal cation serves as cofactor.

It carries out the reaction FMN + ATP + H(+) = FAD + diphosphate. The protein operates within cofactor biosynthesis; FAD biosynthesis; FAD from FMN: step 1/1. In terms of biological role, catalyzes the transfer of the AMP portion of ATP to flavin mononucleotide (FMN) to produce flavin adenine dinucleotide (FAD) coenzyme. In Korarchaeum cryptofilum (strain OPF8), this protein is FAD synthase.